A 99-amino-acid polypeptide reads, in one-letter code: MSMQPTDHIRLTAFVHGHVQGVGFRWWTRSQALELGLAGSATNLDDGRVCVVAEGPEDRCRELLTRLGEQPSRHRRVGTVSTVIEQWSEPRGVEGFTER.

An Acylphosphatase-like domain is found at 10–99 (RLTAFVHGHV…PRGVEGFTER (90 aa)). Active-site residues include Arg-25 and Asn-43.

It belongs to the acylphosphatase family.

It carries out the reaction an acyl phosphate + H2O = a carboxylate + phosphate + H(+). The chain is Acylphosphatase (acyP) from Corynebacterium efficiens (strain DSM 44549 / YS-314 / AJ 12310 / JCM 11189 / NBRC 100395).